The primary structure comprises 529 residues: Beta-glucosidase 11 (529 aa).

Residues 1 to 25 form the signal peptide; it reads MAVAGAMVMSGALLLLHLLAFTCVA. Residues Gln54, His157, and 202–203 contribute to the a beta-D-glucoside site; that span reads NE. The Proton donor role is filled by Glu203. Cys222 and Cys230 are oxidised to a cystine. Tyr346 is a binding site for a beta-D-glucoside. Asn361 is a glycosylation site (N-linked (GlcNAc...) asparagine). Glu417 contacts a beta-D-glucoside. Glu417 acts as the Nucleophile in catalysis. An N-linked (GlcNAc...) asparagine glycan is attached at Asn425. Residues Trp466, 473-474, and Phe482 each bind a beta-D-glucoside; that span reads EW.

It belongs to the glycosyl hydrolase 1 family.

It carries out the reaction Hydrolysis of terminal, non-reducing beta-D-glucosyl residues with release of beta-D-glucose.. This Oryza sativa subsp. japonica (Rice) protein is Beta-glucosidase 11 (BGLU11).